We begin with the raw amino-acid sequence, 474 residues long: MMKLKKFQLHTPFAHSCNRVEIYTARFGPTPFSTKANNLKQPESTLNDHRTIAARQKLYTTSILTPGSIFFLPHGTRIYNRLVDFLRAQYQIHGFEEIITPLIFKKDLWEKSGHWQNYEKEIFRVEESRNVEDEHSNATYGLKPMNCPGHCIVYASTERSYKELPLRFADFSPLHRNEASGALSGLTRLRCFHQDDGHIFCSPESIKDEIKNTLTFVKQVYSLLGMNKLKLYLSTRPEEHIGSLDTWNEAENGLREALQESGETWIINEGDGAFYGPKIDVMVADARGKWHQTATIQLDFNLPQRFKLYYRTDAGDNAGSEKLIKQPVMIHRAIFGSLERFMGILIEHLNGHWPFWLSPRHAVILPVNQTDRILTYAKQVQKELSNQEVNESEFLPLNKNTYYVDINAEAQSIGKRLRESRLLNYNYEIVIGEDEVDKEILSVSSRHNHNSRDTRKMTIQQLKKEFIENVKAYR.

The transit peptide at 1–27 directs the protein to the mitochondrion; sequence MMKLKKFQLHTPFAHSCNRVEIYTARF.

The protein belongs to the class-II aminoacyl-tRNA synthetase family.

The protein resides in the mitochondrion matrix. It catalyses the reaction tRNA(Thr) + L-threonine + ATP = L-threonyl-tRNA(Thr) + AMP + diphosphate + H(+). In Schizosaccharomyces pombe (strain 972 / ATCC 24843) (Fission yeast), this protein is Probable threonine--tRNA ligase, mitochondrial.